A 208-amino-acid chain; its full sequence is CKLF-like MARVEL transmembrane domain-containing protein 4 (208 aa).

Positions 1-11 (MRGGEELDGFE) are enriched in acidic residues. The tract at residues 1-38 (MRGGEELDGFEGEASSTSMISGASSPYQPTTEPVSQRR) is disordered. Residues 15 to 25 (SSTSMISGASS) are compositionally biased toward low complexity. The MARVEL domain occupies 49 to 176 (YLRGALGRLK…STFLAMQKWR (128 aa)). The next 4 helical transmembrane spans lie at 59 to 79 (VAQV…MECS), 85 to 105 (YFFE…LILF), 123 to 143 (LVNT…LAAL), and 151 to 171 (IAAV…TFLA). Ser194 carries the phosphoserine modification.

This sequence belongs to the chemokine-like factor family. In terms of assembly, interacts with PD1L1 and CMTM6.

It is found in the membrane. Its function is as follows. Acts as a backup for CMTM6 to regulate plasma membrane expression of PD-L1/CD274, an immune inhibitory ligand critical for immune tolerance to self and antitumor immunity. May protect PD-L1/CD274 from being polyubiquitinated and targeted for degradation. This Mus musculus (Mouse) protein is CKLF-like MARVEL transmembrane domain-containing protein 4.